The following is a 401-amino-acid chain: Canavanine gamma-lyase (401 aa).

Position 214 is an N6-(pyridoxal phosphate)lysine (Lys214).

The protein belongs to the trans-sulfuration enzymes family. It depends on pyridoxal 5'-phosphate as a cofactor.

It carries out the reaction L-canavanine + H2O = N-hydroxyguanidine + L-homoserine. Functionally, lyase involved in the degradation of canavanine, the delta-oxa-analog of arginine, allowing growth on canavanine as sole nitrogen and carbon source. Catalyzes the elimination of hydroxyguanidine from canavanine with a subsequent water addition to yield homoserine. This is Canavanine gamma-lyase from Rhizobium leguminosarum bv. trifolii (strain WSM2304).